A 126-amino-acid polypeptide reads, in one-letter code: Phosphoribosyl-AMP cyclohydrolase (126 aa).

Aspartate 82 serves as a coordination point for Mg(2+). Cysteine 83 serves as a coordination point for Zn(2+). Positions 84 and 86 each coordinate Mg(2+). Residues cysteine 99 and cysteine 106 each coordinate Zn(2+).

Belongs to the PRA-CH family. In terms of assembly, homodimer. Mg(2+) serves as cofactor. It depends on Zn(2+) as a cofactor.

The protein resides in the cytoplasm. The catalysed reaction is 1-(5-phospho-beta-D-ribosyl)-5'-AMP + H2O = 1-(5-phospho-beta-D-ribosyl)-5-[(5-phospho-beta-D-ribosylamino)methylideneamino]imidazole-4-carboxamide. It participates in amino-acid biosynthesis; L-histidine biosynthesis; L-histidine from 5-phospho-alpha-D-ribose 1-diphosphate: step 3/9. In terms of biological role, catalyzes the hydrolysis of the adenine ring of phosphoribosyl-AMP. This is Phosphoribosyl-AMP cyclohydrolase from Sphingopyxis alaskensis (strain DSM 13593 / LMG 18877 / RB2256) (Sphingomonas alaskensis).